The primary structure comprises 366 residues: 5-hydroxytryptamine receptor 1F (366 aa).

At 1 to 24 the chain is on the extracellular side; it reads MDFLNSSDQNLTSEELLHRMPSKI. 2 N-linked (GlcNAc...) asparagine glycosylation sites follow: Asn5 and Asn10. The helical transmembrane segment at 25–49 threads the bilayer; the sequence is LVSLTLSGLALMTTTINSLVIAAII. Topologically, residues 50 to 59 are cytoplasmic; the sequence is VTRKLHHPAN. A helical membrane pass occupies residues 60–81; sequence YLICSLAVTDFLVAVLVMPFSI. Residues 82 to 96 are Extracellular-facing; the sequence is VYIVRESWIMGQVLC. A disulfide bridge links Cys96 with Cys172. The chain crosses the membrane as a helical span at residues 97-119; sequence DIWLSVDIICCTCSILHLSAIAL. Serotonin is bound by residues Asp103 and Cys107. Positions 120–122 match the DRY motif; important for ligand-induced conformation changes motif; it reads DRY. Residues 120–139 lie on the Cytoplasmic side of the membrane; the sequence is DRYRAITDAVEYARKRTPKQ. Residues 140–159 traverse the membrane as a helical segment; that stretch reads AGIMITIVWIISVFISMPPL. Over 160–178 the chain is Extracellular; the sequence is FWRHQGTSRDDECIIKHDH. A helical transmembrane segment spans residues 179–202; the sequence is IVSTIYSTFGAFYIPLVLILILYY. Topologically, residues 203-291 are cytoplasmic; sequence KIYKAAKTLY…KISGTRERKA (89 aa). Residues 292–315 traverse the membrane as a helical segment; that stretch reads ATTLGLILGAFVICWLPFFVKELV. Topologically, residues 316 to 327 are extracellular; that stretch reads VNVCEKCKISEE. A helical membrane pass occupies residues 328–350; sequence MANFLAWLGYLNSLINPLIYTIF. The NPxxY motif; important for ligand-induced conformation changes and signaling signature appears at 343 to 347; the sequence is NPLIY. The Cytoplasmic segment spans residues 351–366; sequence NEDFKKAFQKLVRCQY.

The protein belongs to the G-protein coupled receptor 1 family.

It is found in the cell membrane. In terms of biological role, G-protein coupled receptor for 5-hydroxytryptamine (serotonin). Also functions as a receptor for various alkaloids and psychoactive substances. Ligand binding causes a conformation change that triggers signaling via guanine nucleotide-binding proteins (G proteins) and modulates the activity of downstream effectors, such as adenylate cyclase. HTR1F is coupled to G(i)/G(o) G alpha proteins and mediates inhibitory neurotransmission by inhibiting adenylate cyclase activity. The polypeptide is 5-hydroxytryptamine receptor 1F (HTR1F) (Cavia porcellus (Guinea pig)).